A 486-amino-acid chain; its full sequence is Ribosomal RNA small subunit methyltransferase F (486 aa).

S-adenosyl-L-methionine-binding positions include 124–130 (ASAPGSK), Glu-148, Asp-175, and Asp-193. Catalysis depends on Cys-246, which acts as the Nucleophile.

It belongs to the class I-like SAM-binding methyltransferase superfamily. RsmB/NOP family.

Its subcellular location is the cytoplasm. It catalyses the reaction cytidine(1407) in 16S rRNA + S-adenosyl-L-methionine = 5-methylcytidine(1407) in 16S rRNA + S-adenosyl-L-homocysteine + H(+). Specifically methylates the cytosine at position 1407 (m5C1407) of 16S rRNA. This Shewanella baltica (strain OS155 / ATCC BAA-1091) protein is Ribosomal RNA small subunit methyltransferase F.